A 199-amino-acid polypeptide reads, in one-letter code: Transcriptional regulatory protein EntR (199 aa).

The region spanning 3-124 is the Response regulatory domain; that stretch reads KILVIDRCHF…TLSHTIQEAL (122 aa). Asp-8 carries the post-translational modification 4-aspartylphosphate. The region spanning 133–198 is the HTH luxR-type domain; sequence PKNATPLLTP…SPFLSLPGKG (66 aa). A DNA-binding region (H-T-H motif) is located at residues 157–176; sequence NNAIAAALSIHGKTVYTYKR.

Its function is as follows. May serve to repress the entericidin locus in C.freundii. The chain is Transcriptional regulatory protein EntR (ecnR) from Citrobacter freundii.